Consider the following 606-residue polypeptide: Ribonucleoprotein PTB-binding 1 (606 aa).

Residues 1-41 form a disordered region; that stretch reads MAADVSVTHRPPLSPKSGAEVEAGDAAERRAPEEELPPLDP. At Ala-2 the chain carries N-acetylalanine. Residues Ser-6 and Ser-14 each carry the phosphoserine modification. The Nuclear localization signal signature appears at 45 to 60; it reads RKRLEHTERQFRNRRK. RRM domains follow at residues 59–130, 132–210, and 221–299; these read RKIL…LQPT, ALLC…WTDA, and RCLC…FCAP. The segment at 307–395 is interaction with PTBP1; that stretch reads LAALIAAQAT…QTQGQKKPGI (89 aa). Residues 391–474 form a disordered region; sequence KKPGILGDSP…PPAPVGLRGS (84 aa). Residues 453–462 are compositionally biased toward low complexity; sequence LGLGPPAAQL. Phosphothreonine is present on Thr-463. Phosphoserine is present on Ser-474. Pro-488 carries the phosphothreonine modification. Residues 519-564 are disordered; that stretch reads GLLGLSPGPNGHSHLLKVRAGGGDMQGWEAPAPQRPLTRPALPSVS. Residues Ser-562 and His-567 each carry the phosphoserine modification. The disordered stretch occupies residues 579–606; that stretch reads CPRPSPAQKAAMWASTPRASAATTRTPT. The segment covering 592 to 606 has biased composition (low complexity); it reads ASTPRASAATTRTPT.

In terms of assembly, interacts with PTBP1, RAVER2, VCL and ACTN1. Part of a complex containing RAVER1, VCL and ACTN1.

It is found in the nucleus. Its subcellular location is the cytoplasm. Its function is as follows. Cooperates with PTBP1 to modulate regulated alternative splicing events. Promotes exon skipping. Cooperates with PTBP1 to modulate switching between mutually exclusive exons during maturation of the TPM1 pre-mRNA. The sequence is that of Ribonucleoprotein PTB-binding 1 (RAVER1) from Homo sapiens (Human).